A 334-amino-acid polypeptide reads, in one-letter code: F-box only protein 16 (334 aa).

The F-box domain occupies 86–132 (LDFTTKLPRVLSVYIFSFLDPRSLCRCAQVSWYWKSLAELDQLWMLK). 2 disordered regions span residues 168–222 (PKTP…WRSS) and 314–334 (LEHL…QSQS). The span at 194 to 204 (SPSLAFRSSSS) shows a compositional bias: low complexity. The span at 210–222 (NPGEKELPPWRSS) shows a compositional bias: basic and acidic residues. The segment covering 323–334 (LQSPSPRLQSQS) has biased composition (low complexity).

Part of a SCF (SKP1-cullin-F-box) protein ligase complex.

Its function is as follows. Probably recognizes and binds to some phosphorylated proteins and promotes their ubiquitination and degradation. The protein is F-box only protein 16 (Fbxo16) of Mus musculus (Mouse).